The following is a 92-amino-acid chain: DNA/RNA-binding protein Alba (92 aa).

The residue at position 11 (K11) is an N6-acetyllysine.

The protein belongs to the histone-like Alba family. In terms of processing, acetylated. Acetylation at Lys-11 decreases DNA-binding affinity.

Its subcellular location is the cytoplasm. The protein localises to the chromosome. Functionally, binds double-stranded DNA tightly but without sequence specificity. Involved in DNA compaction. The protein is DNA/RNA-binding protein Alba of Pyrobaculum calidifontis (strain DSM 21063 / JCM 11548 / VA1).